The chain runs to 582 residues: 2-succinyl-5-enolpyruvyl-6-hydroxy-3-cyclohexene-1-carboxylate synthase (582 aa).

The protein belongs to the TPP enzyme family. MenD subfamily. In terms of assembly, homodimer. It depends on Mg(2+) as a cofactor. Mn(2+) is required as a cofactor. Thiamine diphosphate serves as cofactor.

It catalyses the reaction isochorismate + 2-oxoglutarate + H(+) = 5-enolpyruvoyl-6-hydroxy-2-succinyl-cyclohex-3-ene-1-carboxylate + CO2. Its pathway is quinol/quinone metabolism; 1,4-dihydroxy-2-naphthoate biosynthesis; 1,4-dihydroxy-2-naphthoate from chorismate: step 2/7. The protein operates within cofactor biosynthesis; phylloquinone biosynthesis. Its function is as follows. Catalyzes the thiamine diphosphate-dependent decarboxylation of 2-oxoglutarate and the subsequent addition of the resulting succinic semialdehyde-thiamine pyrophosphate anion to isochorismate to yield 2-succinyl-5-enolpyruvyl-6-hydroxy-3-cyclohexene-1-carboxylate (SEPHCHC). This is 2-succinyl-5-enolpyruvyl-6-hydroxy-3-cyclohexene-1-carboxylate synthase from Synechococcus elongatus (strain ATCC 33912 / PCC 7942 / FACHB-805) (Anacystis nidulans R2).